The primary structure comprises 398 residues: Acetate kinase (398 aa).

N8 serves as a coordination point for Mg(2+). K15 is a binding site for ATP. A substrate-binding site is contributed by R89. D146 acts as the Proton donor/acceptor in catalysis. Residues 206 to 210, 283 to 285, and 331 to 335 each bind ATP; these read HIGNG, DMR, and GMGEN. E383 provides a ligand contact to Mg(2+).

It belongs to the acetokinase family. As to quaternary structure, homodimer. Requires Mg(2+) as cofactor. It depends on Mn(2+) as a cofactor.

The protein resides in the cytoplasm. It catalyses the reaction acetate + ATP = acetyl phosphate + ADP. It participates in metabolic intermediate biosynthesis; acetyl-CoA biosynthesis; acetyl-CoA from acetate: step 1/2. Catalyzes the formation of acetyl phosphate from acetate and ATP. Can also catalyze the reverse reaction. In Streptococcus pyogenes serotype M6 (strain ATCC BAA-946 / MGAS10394), this protein is Acetate kinase.